The primary structure comprises 581 residues: Guanine nucleotide-binding protein-like 3 homolog (581 aa).

Basic residues predominate over residues 1–49 (MALKRLKTKKSKRLTGRLKHKIEKKVRDHNKKERRAAKKNPKKGSKKQK). Positions 1–50 (MALKRLKTKKSKRLTGRLKHKIEKKVRDHNKKERRAAKKNPKKGSKKQKL) are disordered. Positions 64–108 (LKEVEEAKQRQEAERLARREAFKAEREQNKFKTLESMVEDADMRS) form a coiled coil. Serine 99 is modified (phosphoserine). The region spanning 141–325 (FKEFRKVIEN…LIDCPGIVFT (185 aa)) is the CP-type G domain. GTP is bound by residues 189–192 (NKAD), 274–281 (GIPNVGKS), and 318–321 (DCPG). Basic and acidic residues predominate over residues 500–517 (KPAKGRKRKLDEEKEKVD). A disordered region spans residues 500–519 (KPAKGRKRKLDEEKEKVDPS).

The protein belongs to the TRAFAC class YlqF/YawG GTPase family.

Its subcellular location is the nucleus. The protein localises to the nucleolus. In terms of biological role, may play a role in regulating cellular proliferation. This Drosophila melanogaster (Fruit fly) protein is Guanine nucleotide-binding protein-like 3 homolog (Ns1).